The primary structure comprises 372 residues: Delta-type opioid receptor (372 aa).

Residues 1–47 (MEPVPSARAELQFSLLANVSDTFPSAFPSASANASGSPGARSASSLA) are Extracellular-facing. 2 N-linked (GlcNAc...) asparagine glycosylation sites follow: Asn18 and Asn33. The helical transmembrane segment at 48-75 (LAIAITALYSAVCAVGLLGNVLVMFGIV) threads the bilayer. Over 76–85 (RYTKLKTATN) the chain is Cytoplasmic. A helical membrane pass occupies residues 86-110 (IYIFNLALADALATSTLPFQSAKYL). Over 111-122 (METWPFGELLCK) the chain is Extracellular. Cys121 and Cys198 are joined by a disulfide. A helical transmembrane segment spans residues 123–144 (AVLSIDYYNMFTSIFTLTMMSV). Topologically, residues 145–163 (DRYIAVCHPVKALDFRTPA) are cytoplasmic. Residues 164 to 186 (KAKLINICIWVLASGVGVPIMVM) traverse the membrane as a helical segment. Residues 187–206 (AVTQPRDGAVVCTLQFPSPS) lie on the Extracellular side of the membrane. The helical transmembrane segment at 207–238 (WYWDTVTKICVFLFAFVVPILIITVCYGLMLL) threads the bilayer. Residues 239–261 (RLRSVRLLSGSKEKDRSLRRITR) lie on the Cytoplasmic side of the membrane. The chain crosses the membrane as a helical span at residues 262 to 284 (MVLVVVGAFVVCWAPIHIFVIVW). At 285 to 299 (TLVDINRRDPLVVAA) the chain is on the extracellular side. Residues 300–321 (LHLCIALGYANSSLNPVLYAFL) form a helical membrane-spanning segment. Over 322–372 (DENFKRCFRQLCRAPCGGQEPGSLRRPRQATARERVTACTPSDGPGGGAAA) the chain is Cytoplasmic. Residue Cys333 is the site of S-palmitoyl cysteine attachment. The disordered stretch occupies residues 340–372 (QEPGSLRRPRQATARERVTACTPSDGPGGGAAA).

This sequence belongs to the G-protein coupled receptor 1 family. In terms of assembly, may form homooligomers. Forms a heterodimer with OPRM1. Interacts with GPRASP1. Interacts with RTP4; the interaction promotes cell surface localization of the OPRD1-OPRM1 heterodimer. In terms of processing, ubiquitinated. A basal ubiquitination seems not to be related to degradation. Ubiquitination is increased upon formation of OPRM1:OPRD1 oligomers leading to proteasomal degradation; the ubiquitination is diminished by RTP4. Detected in brain, brain stem and brain cortex.

Its subcellular location is the cell membrane. Functionally, G-protein coupled receptor that functions as a receptor for endogenous enkephalins and for a subset of other opioids. Ligand binding causes a conformation change that triggers signaling via guanine nucleotide-binding proteins (G proteins) and modulates the activity of down-stream effectors, such as adenylate cyclase. Signaling leads to the inhibition of adenylate cyclase activity. Inhibits neurotransmitter release by reducing calcium ion currents and increasing potassium ion conductance. Plays a role in the perception of pain and in opiate-mediated analgesia. Plays a role in developing analgesic tolerance to morphine. The polypeptide is Delta-type opioid receptor (Oprd1) (Rattus norvegicus (Rat)).